A 166-amino-acid polypeptide reads, in one-letter code: PTS system glucose-specific EIIA component (166 aa).

Positions 34–138 (DPVFAQKMMG…SVISPIIITN (105 aa)) constitute a PTS EIIA type-1 domain. 2 residues coordinate Zn(2+): His-71 and His-86. Catalysis depends on His-86, which acts as the Tele-phosphohistidine intermediate; for EIIA activity. His-86 bears the Phosphohistidine; by HPr mark.

In terms of assembly, heterodimer with glycerol kinase (glpk). It depends on Zn(2+) as a cofactor.

The protein localises to the cytoplasm. Its function is as follows. The phosphoenolpyruvate-dependent sugar phosphotransferase system (sugar PTS), a major carbohydrate active transport system, catalyzes the phosphorylation of incoming sugar substrates concomitantly with their translocation across the cell membrane. The enzyme II complex composed of PtsG and Crr is involved in glucose transport. In Staphylococcus aureus (strain MSSA476), this protein is PTS system glucose-specific EIIA component (crr).